Consider the following 1377-residue polypeptide: Hemoglobin-binding protease hbp autotransporter (1377 aa).

The N-terminal stretch at 1–52 (MNRIYSLRYSAVARGFIAVSEFARKCVHKSVRRLCFPVLLLIPVLFSAGSLA) is a signal peptide. The region spanning 53–302 (GTVNNELGYQ…AVIPLDFIGQ (250 aa)) is the Peptidase S6 domain. Residues histidine 125, aspartate 153, and serine 259 each act as charge relay system in the active site. An Autotransporter domain is found at 1111–1377 (DINGEAGTWV…AINANIRYSF (267 aa)).

Post-translationally, cleaved to release the mature protein from the outer membrane.

Its subcellular location is the periplasm. The protein resides in the secreted. The protein localises to the cell surface. It localises to the cell outer membrane. With respect to regulation, protease activity is inhibited by 3,4-dichloroisocoumarin. Its function is as follows. Interacts with hemoglobin, degrades it and subsequently binds the released heme. Could make heme accessible not only for E.coli, but also for B.fragilis during mixed intra-abdominal infections. Has a role in abscess formation. The polypeptide is Hemoglobin-binding protease hbp autotransporter (hbp) (Escherichia coli).